The chain runs to 1672 residues: Probable outer membrane protein PmpB (1672 aa).

An N-terminal signal peptide occupies residues 1–14; that stretch reads MSSMKWLSATAVFA. Disordered regions lie at residues 69-122, 203-263, 384-415, and 734-765; these read IPVK…GGAF, NTAE…GSGG, EAQTNKSSVTAASQSGPNTTPTPTPPVTAKGG, and STGVATTATTSQSPTVSSFLPRATAGSSPAPA. Composition is skewed to low complexity over residues 77–88, 100–111, and 203–234; these read DDSSTSTPTTSS, SSSSSPNSGDTS, and NTAEVVPEETTPNPNPGTQTTTSQPSPTSKVQ. Composition is skewed to polar residues over residues 235 to 256 and 384 to 399; these read SLFTYSSSTQANGNGADSQTPS and EAQTNKSSVTAASQSG. Residues 734 to 744 show a composition bias toward low complexity; that stretch reads STGVATTATTS. The Autotransporter domain occupies 1379–1672; it reads DDAAYNNFWV…MTSCGARMIF (294 aa).

Belongs to the PMP outer membrane protein family.

It localises to the secreted. The protein localises to the cell wall. It is found in the cell outer membrane. This is Probable outer membrane protein PmpB (pmpB) from Chlamydia muridarum (strain MoPn / Nigg).